A 273-amino-acid polypeptide reads, in one-letter code: MALKNFNPITPSLRELVQVDKTSLWKGRPLKSLTKGISKTGGRNNQGRITSWHRGGGHKKLYRIIDFKRNKIDISAIVERIEYDPNRTAFIALIKYEDGEYSYILAPQKLSVGNRVISSQDADIKIGNCLPLKCIPIGTTLHNVEMQVGKGGQIARSAGTSVDLVGKDSGYAQIKLRSGEFRLVPLDCKATIGSISNPDQKNINLGKAGRNRWLGWRPHVRGVAMNPVDHPHGGGEGKTSGGRHPVTPWGFPTKGKKTRKNKRTSKFIVKKRK.

The segment at 228–273 (VDHPHGGGEGKTSGGRHPVTPWGFPTKGKKTRKNKRTSKFIVKKRK) is disordered. Residues 254-273 (KGKKTRKNKRTSKFIVKKRK) show a composition bias toward basic residues.

This sequence belongs to the universal ribosomal protein uL2 family. Part of the 50S ribosomal subunit. Forms a bridge to the 30S subunit in the 70S ribosome.

One of the primary rRNA binding proteins. Required for association of the 30S and 50S subunits to form the 70S ribosome, for tRNA binding and peptide bond formation. It has been suggested to have peptidyltransferase activity; this is somewhat controversial. Makes several contacts with the 16S rRNA in the 70S ribosome. The polypeptide is Large ribosomal subunit protein uL2 (Rickettsia massiliae (strain Mtu5)).